We begin with the raw amino-acid sequence, 510 residues long: Chromosomal replication initiator protein DnaA (510 aa).

The domain I, interacts with DnaA modulators stretch occupies residues 1-74 (MHTDLWERGC…EATLSELAGK (74 aa)). The tract at residues 74–173 (KPVRLELSLL…PTLSPAVSRG (100 aa)) is domain II. The segment at 125–168 (ARHDPQSVVPTPGGSANGRAAPRVGEPGGPVGTSTLPVAPTLSP) is disordered. Residues 174 to 390 (RLNPALTFDT…GALRKVLAYS (217 aa)) form a domain III, AAA+ region region. ATP contacts are provided by Gly-218, Gly-220, Lys-221, and Thr-222. The interval 391–510 (RFSHKEISIN…LHVLEQTLKG (120 aa)) is domain IV, binds dsDNA.

The protein belongs to the DnaA family. In terms of assembly, oligomerizes as a right-handed, spiral filament on DNA at oriC.

Its subcellular location is the cytoplasm. In terms of biological role, plays an essential role in the initiation and regulation of chromosomal replication. ATP-DnaA binds to the origin of replication (oriC) to initiate formation of the DNA replication initiation complex once per cell cycle. Binds the DnaA box (a 9 base pair repeat at the origin) and separates the double-stranded (ds)DNA. Forms a right-handed helical filament on oriC DNA; dsDNA binds to the exterior of the filament while single-stranded (ss)DNA is stabiized in the filament's interior. The ATP-DnaA-oriC complex binds and stabilizes one strand of the AT-rich DNA unwinding element (DUE), permitting loading of DNA polymerase. After initiation quickly degrades to an ADP-DnaA complex that is not apt for DNA replication. Binds acidic phospholipids. This is Chromosomal replication initiator protein DnaA from Leptothrix cholodnii (strain ATCC 51168 / LMG 8142 / SP-6) (Leptothrix discophora (strain SP-6)).